The sequence spans 340 residues: Hyaluronan and proteoglycan link protein 2 (340 aa).

Residues 1 to 26 (MPGWLTLPTLCRFLLWAFTIFHKAQG) form the signal peptide. An Ig-like V-type domain is found at 34-144 (PHYLLPPIHE…EDESVALTLS (111 aa)). Disulfide bonds link Cys57–Cys128, Cys170–Cys240, Cys194–Cys215, Cys265–Cys336, and Cys290–Cys311. Link domains follow at residues 148 to 242 (VVFP…FCFT) and 245 to 338 (LAGQ…YCYA).

The protein belongs to the HAPLN family. As to expression, expressed only in adult brain.

The protein localises to the secreted. It is found in the extracellular space. It localises to the extracellular matrix. Mediates a firm binding of versican V2 to hyaluronic acid. May play a pivotal role in the formation of the hyaluronan-associated matrix in the central nervous system (CNS) which facilitates neuronal conduction and general structural stabilization. Binds to hyaluronic acid. This is Hyaluronan and proteoglycan link protein 2 (HAPLN2) from Homo sapiens (Human).